Consider the following 440-residue polypeptide: Cobyrinate a,c-diamide synthase (440 aa).

The GATase cobBQ-type domain occupies 247-428; it reads RIAIAYDAAF…MHLYFPSNPR (182 aa). Cys329 functions as the Nucleophile in the catalytic mechanism.

Belongs to the CobB/CbiA family. The cofactor is Mg(2+).

It catalyses the reaction cob(II)yrinate + 2 L-glutamine + 2 ATP + 2 H2O = cob(II)yrinate a,c diamide + 2 L-glutamate + 2 ADP + 2 phosphate + 2 H(+). The protein operates within cofactor biosynthesis; adenosylcobalamin biosynthesis; cob(II)yrinate a,c-diamide from sirohydrochlorin (anaerobic route): step 10/10. Catalyzes the ATP-dependent amidation of the two carboxylate groups at positions a and c of cobyrinate, using either L-glutamine or ammonia as the nitrogen source. In Picrophilus torridus (strain ATCC 700027 / DSM 9790 / JCM 10055 / NBRC 100828 / KAW 2/3), this protein is Cobyrinate a,c-diamide synthase.